The following is a 186-amino-acid chain: Peptidyl-tRNA hydrolase (186 aa).

Tyr-14 contributes to the tRNA binding site. The Proton acceptor role is filled by His-19. TRNA is bound by residues Tyr-64, Asn-66, and Asn-112.

It belongs to the PTH family. As to quaternary structure, monomer.

It localises to the cytoplasm. The catalysed reaction is an N-acyl-L-alpha-aminoacyl-tRNA + H2O = an N-acyl-L-amino acid + a tRNA + H(+). Hydrolyzes ribosome-free peptidyl-tRNAs (with 1 or more amino acids incorporated), which drop off the ribosome during protein synthesis, or as a result of ribosome stalling. Its function is as follows. Catalyzes the release of premature peptidyl moieties from peptidyl-tRNA molecules trapped in stalled 50S ribosomal subunits, and thus maintains levels of free tRNAs and 50S ribosomes. The protein is Peptidyl-tRNA hydrolase of Mesoplasma florum (strain ATCC 33453 / NBRC 100688 / NCTC 11704 / L1) (Acholeplasma florum).